A 2287-amino-acid polypeptide reads, in one-letter code: MKGHQFKSWIFELREIVREIKNSHYFLDSWTQFNSVGSFIHIFFHQERFRKLLDPRIFSILLLRNSQGSTSNRYFTIKGVVLFVVAALLYRINNRNMVESKNLYLKGLLPIPMNSIGPRNDTSEESFGSSNINRLIVSLLYLTKGKKISESCFRDPKESTWVLPITKKCIMPESNWSSRWWRNWIGKKRDFWCKISNETVAGIDISFKEKDIKYLEFLFVYYMDDPIRKGHDWELFDRLSPSKRRNIINLNSGQLFEILVKDWICYLMFAFREKIPIEVEGFFKQQGAGSTIQSNDIEHVSHLFSRNKWAISLQNCAQFHMWQFHQDLFVSWGKSPHESDFLRKISRENWIWLDNVWLVNKDRFFSKVRNVSSNIQYDSTRSSFVQVTDSSQLNGSSDQFIDPFDSISNEYSEYHYHTLINQREIQQLKERSILWDPSFIQTEGREIESDRFPKYLSGYSSMPRLFTEREKRMNNHLLPEESEEFLGNSTRAIRSFFSDRWSELHLGSNPTERSTRDQKLLKKEQDVSFVPSRRSENKEIVNIFKIITYLQNTVSIHPISSDLGCDMVPKDELDMDSSNKISFLNKNPFFDLFHLFHERKRGGYTLRHDFESEERFQEMADLFTLSITEPDLVYHKGFAFSIDSYGLDQRQFLKEVFNSRDESKKKSLLVLPPIFYEENESFYRRIRKNWVRISCGNYLEDPKRVVFASNNIMEAVNQYRLIRNLIQIQFQYSPYGYIRNVLNRFFLMKRPDRNFEYGIQRDLIGNDTLNHRMKDTINQHLSNLKKSQKKWFDPLIFLSRTERSINRDPNAYRYKWSNGSKNFQEHLEHFVSERKSRFQVVFDRLCINQYSIDWSEVIDKKDLSKSLRFFLSKLLRFFLSKLLLFLSKLLLFLSNSLPFFFVSFENIPIHRSEIHIYELKGPNDQLCNQLLESIGLQIVHLKKLKPFLLDDHNTSQKSKFLINGGTISPFLFNKIPKWMIDSFHTRKNRGKSFDNTDSYFSIVSHDQDNWLNPVKPFQRSSLISSFSKANRLRFLNNPHHFCFYCNKRFPFYVEKARLNNSDFTYGQFLTILFIHNKIFSSCGGKKKHEHAFLERDTISPSSIESQVSNIFISNDFPQSGDERYNLYKSFHFPIRSDPLVRRAIYSIADISGTPLIEGQRVNFERTYCQTLSDMNLSDSEEKSLHQYLNFNSNMGLIHTPCSEKYLQRKKRSLCLKKCVDKGQMDRTFQRDSAFSTLSKWNLFQTYMPWFFTSTGYKYLNLIFLDTFSDLLRILSSSQKFVSIFHDIMHGLDISWRILQKKLCLPQRNPISEISSKSLHNLLLSEEMIHRNNESSLISTHLRSPNVREVLYSILFLLLVAGYIVRTHLLFVSRAYSELQTEFEKIKSLMIPSYMIELRKLLDRYPTSELNSFWLKNLFLVALEQLGDCLEEIRGSGGNMLWGGDPARSKKKDLKINFIDIIDLISIIPNPINRITFSRNTRHLSHTSKEIYSLIRKRKNVSGDWIDDKIESWVANSDSIDDKEREFLVQFSTLRAEKRIDQILLSLTHSDHLSKNDSGYQMIEQPGTIYLRYLVDIHKKYLMNYEFNTSCLAERRIFLAHYQTITYSQTSCGANSFHFPSHGKPFSLRLALSPSRSILVIGSIGTGRSYLVKYLATNSYVPFITVFLNKFLDNKPKGFFIDDIDIDDSDDIDASNDIDRELDTELELLTMMNALTMDMMSEIDRFYITLQFELAKAMSPCIIWIPNIHDLDVNESNYLALGLLVNSLSRDCERCSTRNILVIASTHIPQKVDPALIAPNKLNTCIKIRRLLIPQQRKHFFTLSYTRGFHLEKKMFHTNGFESITMGSSARDLVALTNEALSISITQKKSIIDTNTIRSALHRQTWDLRSQVRSVQDHGILFYQIGRAVAQNVLISNCPIDPISIYMKKKSCNEGDSYLYKWYFELGTSMKKFTILLYLLSCSAGSVAQDLWSLPGPDEKNRITSYGFIENDSDLVHGLLEVQGALVGSSRTEKDCSQFDNDRVTLLFRSEPRDPLYMMQDGSCSIVDQRFLYEKYESEFEEGEGEGVLDPQQIEEDLFNHIVWAPRIWRPRGFLFDCIERPNELGFPYLAGSFRGKRIIYDEKYELQENDSEFLQSGTMQYQRRDRSSKEQGFFRISQFIWDPADPLFFLFKDQPFVSVFSHREFFADEEMSKGLLTSQTDPPTSIYKRWFIKNTQEKHFELLIQRQRWLRTNSSLSNGFFRSNTRSESYQYLSNLFLSNGTLLDRMTKTLLKKRWLFPDEMKIGFM.

An ATP-binding site is contributed by 1641-1648 (GSIGTGRS).

This sequence belongs to the Ycf2 family.

The protein localises to the plastid. Its subcellular location is the chloroplast stroma. Probable ATPase of unknown function. Its presence in a non-photosynthetic plant (Epifagus virginiana) and experiments in tobacco indicate that it has an essential function which is probably not related to photosynthesis. This is Protein Ycf2 from Lepidium virginicum (Virginia pepperweed).